The primary structure comprises 291 residues: 3-hydroxy-5-phosphonooxypentane-2,4-dione thiolase (291 aa).

Lys203 serves as the catalytic Schiff-base intermediate with substrate.

The protein belongs to the DeoC/FbaB aldolase family. Homodecamer.

Its subcellular location is the cytoplasm. It catalyses the reaction dihydroxyacetone phosphate + acetyl-CoA = 3-hydroxy-2,4-dioxopentyl phosphate + CoA. Involved in the degradation of phospho-AI-2, thereby terminating induction of the lsr operon and closing the AI-2 signaling cycle. Catalyzes the transfer of an acetyl moiety from 3-hydroxy-5-phosphonooxypentane-2,4-dione to CoA to form glycerone phosphate and acetyl-CoA. This Yersinia pseudotuberculosis serotype O:1b (strain IP 31758) protein is 3-hydroxy-5-phosphonooxypentane-2,4-dione thiolase.